The sequence spans 527 residues: AAA ATPase forming ring-shaped complexes (527 aa).

Positions 1 to 18 (MVTMSSPTDSSPSNSFSD) are enriched in low complexity. The interval 1–38 (MVTMSSPTDSSPSNSFSDFNREEQSRLSDEVRQLKRTN) is disordered. Over residues 19-33 (FNREEQSRLSDEVRQ) the composition is skewed to basic and acidic residues. A coiled-coil region spans residues 21 to 53 (REEQSRLSDEVRQLKRTNSDLGARNAKLAEMLK). Residue 257 to 262 (GCGKTL) coordinates ATP. Residues 492–515 (DENQQSEDLPNTSNPDEWSRITGR) are disordered. Polar residues predominate over residues 497 to 507 (SEDLPNTSNPD).

It belongs to the AAA ATPase family. Homohexamer. Assembles into a hexameric ring structure.

This is AAA ATPase forming ring-shaped complexes from Corynebacterium glutamicum (strain R).